A 318-amino-acid chain; its full sequence is MFMVNLLLLIIPALIAMAFLTLTERKILGYMQFRKGPNIVGPYGMLQPIADAMKLFMKEPLLPTTSASTLYMTAPTLALSIALLMWSPLPMPHPLINFNLGLLFMLATSSLAVYSILWSGWASNSNYALIGALRAVAQTISYEVTLAIILLSTLLMSGSFNLQSLITTQEHSWLLLPSWPMAMMWFTSTLAETNRAPFDLTEGESELVSGFNIEYAAGSFALFFMAEYMNIIMMNALTTTIFLAMPYNMASSELYTMNFMTKTLLLTTLFLWIRTAYPRFRYDQLMHLLWKKFLPLTLALCMWYISMPALTSGIPPQT.

A run of 8 helical transmembrane segments spans residues 2–22 (FMVN…FLTL), 76–96 (TLAL…HPLI), 98–118 (FNLG…SILW), 140–160 (ISYE…SGSF), 171–191 (HSWL…STLA), 217–237 (AGSF…MNAL), 253–273 (ELYT…FLWI), and 294–314 (LPLT…TSGI).

This sequence belongs to the complex I subunit 1 family. Core subunit of respiratory chain NADH dehydrogenase (Complex I) which is composed of 45 different subunits.

Its subcellular location is the mitochondrion inner membrane. The enzyme catalyses a ubiquinone + NADH + 5 H(+)(in) = a ubiquinol + NAD(+) + 4 H(+)(out). In terms of biological role, core subunit of the mitochondrial membrane respiratory chain NADH dehydrogenase (Complex I) which catalyzes electron transfer from NADH through the respiratory chain, using ubiquinone as an electron acceptor. Essential for the catalytic activity and assembly of complex I. This Ateles paniscus (Black spider monkey) protein is NADH-ubiquinone oxidoreductase chain 1 (MT-ND1).